Reading from the N-terminus, the 429-residue chain is 3-isopropylmalate dehydratase large subunit (429 aa).

Cysteine 303, cysteine 363, and cysteine 366 together coordinate [4Fe-4S] cluster.

The protein belongs to the aconitase/IPM isomerase family. LeuC type 2 subfamily. As to quaternary structure, heterodimer of LeuC and LeuD. The cofactor is [4Fe-4S] cluster.

The catalysed reaction is (2R,3S)-3-isopropylmalate = (2S)-2-isopropylmalate. Its pathway is amino-acid biosynthesis; L-leucine biosynthesis; L-leucine from 3-methyl-2-oxobutanoate: step 2/4. Functionally, catalyzes the isomerization between 2-isopropylmalate and 3-isopropylmalate, via the formation of 2-isopropylmaleate. The protein is 3-isopropylmalate dehydratase large subunit of Caldicellulosiruptor bescii (strain ATCC BAA-1888 / DSM 6725 / KCTC 15123 / Z-1320) (Anaerocellum thermophilum).